A 124-amino-acid chain; its full sequence is Holo-[acyl-carrier-protein] synthase (124 aa).

Mg(2+)-binding residues include Asp-8 and Glu-56.

Belongs to the P-Pant transferase superfamily. AcpS family. Mg(2+) serves as cofactor.

It is found in the cytoplasm. The enzyme catalyses apo-[ACP] + CoA = holo-[ACP] + adenosine 3',5'-bisphosphate + H(+). Its function is as follows. Transfers the 4'-phosphopantetheine moiety from coenzyme A to a Ser of acyl-carrier-protein. This Clostridium acetobutylicum (strain ATCC 824 / DSM 792 / JCM 1419 / IAM 19013 / LMG 5710 / NBRC 13948 / NRRL B-527 / VKM B-1787 / 2291 / W) protein is Holo-[acyl-carrier-protein] synthase.